The following is a 141-amino-acid chain: Large ribosomal subunit protein uL11 (141 aa).

This sequence belongs to the universal ribosomal protein uL11 family. In terms of assembly, part of the ribosomal stalk of the 50S ribosomal subunit. Interacts with L10 and the large rRNA to form the base of the stalk. L10 forms an elongated spine to which L12 dimers bind in a sequential fashion forming a multimeric L10(L12)X complex. In terms of processing, one or more lysine residues are methylated.

Functionally, forms part of the ribosomal stalk which helps the ribosome interact with GTP-bound translation factors. In Helicobacter acinonychis (strain Sheeba), this protein is Large ribosomal subunit protein uL11.